A 273-amino-acid polypeptide reads, in one-letter code: Oligodendrocyte transcription factor 3 (273 aa).

Residues 1–14 show a composition bias toward low complexity; it reads MNSDSSSVSSRASS. The segment at 1–72 is disordered; the sequence is MNSDSSSVSS…KAAGESSKYK (72 aa). Positions 24–34 are enriched in basic residues; sequence DHHHRHHHHHQ. The segment covering 37–47 has biased composition (polar residues); the sequence is RLNSVSSTQGD. Positions 69-90 form a coiled coil; that stretch reads SKYKIKKQLSEQDLQQLRLKIN. Residues 84 to 138 form the bHLH domain; that stretch reads QLRLKINGRERKRMHDLNLAMDGLREVMPYAHGPSVRKLSKIATLLLARNYILML.

As to expression, weakly expressed, mainly in non-neural tissues.

Its subcellular location is the nucleus. Its function is as follows. May determine the distinct specification program of class A neurons in the dorsal part of the spinal cord and suppress specification of class B neurons. The protein is Oligodendrocyte transcription factor 3 (Olig3) of Mus musculus (Mouse).